Consider the following 3096-residue polypeptide: Cilia- and flagella-associated protein 54 (3096 aa).

Residues 1–45 (MAAQGSPSSSPSDDSTTSGSLPELPPTSTATSRSPPESKGSSRSS) are compositionally biased toward low complexity. Disordered regions lie at residues 1 to 46 (MAAQ…RSSL) and 1248 to 1267 (SNEQ…LKTK).

This sequence belongs to the CFAP54 family.

The protein resides in the cytoplasm. Its subcellular location is the cytoskeleton. It localises to the cilium axoneme. Its function is as follows. Required for assembly and function of cilia and flagella. In Homo sapiens (Human), this protein is Cilia- and flagella-associated protein 54.